The chain runs to 265 residues: Aquaporin-5 (265 aa).

Residues 1–12 (MKKEVCSLAFLK) lie on the Cytoplasmic side of the membrane. A helical transmembrane segment spans residues 13–33 (AVFAEFLATLIFVFFGLASAL). Over 34–39 (KWPSAL) the chain is Extracellular. A helical transmembrane segment spans residues 40–60 (PTILQIALAFGLAIGTLAQAL). The Cytoplasmic portion of the chain corresponds to 61–65 (GPVSG). Residues 66 to 74 (GHINPAITL) constitute an intramembrane region (discontinuously helical). Residues 69–71 (NPA) carry the NPA 1 motif. The Cytoplasmic segment spans residues 75–87 (ALLVGNQISLLRA). A helical membrane pass occupies residues 88–108 (VFYVVAQLVGAIAGAGILYGL). The Extracellular segment spans residues 109 to 126 (APGNARGNLAVNSLNNNT). A glycan (N-linked (GlcNAc...) asparagine) is linked at asparagine 124. The chain crosses the membrane as a helical span at residues 127-147 (TPGQAVVVEMILTFQLALCIF). Residues 148-158 (SSTDSRRTSPV) are Cytoplasmic-facing. Residues 159–179 (GSPALSIGLSVTLGHLVGIYF) traverse the membrane as a helical segment. Threonine 180 is a topological domain (extracellular). The discontinuously helical intramembrane region spans 181–191 (GCSMNPARSFG). The short motif at 185–187 (NPA) is the NPA 2 element. Residues 192 to 203 (PAVVMNRFSPSH) lie on the Extracellular side of the membrane. The chain crosses the membrane as a helical span at residues 204–224 (WVFWVGPIVGAAVAAILYFYL). The Cytoplasmic segment spans residues 225–265 (LFPNSLSLSERVAVVKGTYESEEDWEEQREERKKTMELTAH).

This sequence belongs to the MIP/aquaporin (TC 1.A.8) family. In terms of assembly, homotetramer; each monomer provides an independent water pore. Interacts with TRPV4; the interaction is probably indirect and regulates TRPV4 activation by hypotonicity.

Its subcellular location is the apical cell membrane. The protein resides in the cell membrane. It is found in the cytoplasmic vesicle membrane. The catalysed reaction is H2O(in) = H2O(out). Functionally, aquaporins form homotetrameric transmembrane channels, with each monomer independently mediating water transport across the plasma membrane along its osmotic gradient. Plays an important role in fluid secretion in salivary glands. Required for TRPV4 activation by hypotonicity. Together with TRPV4, controls regulatory volume decrease in salivary epithelial cells. Seems to play a redundant role in water transport in the eye, lung and in sweat glands. The polypeptide is Aquaporin-5 (Sus scrofa (Pig)).